The sequence spans 184 residues: Ribosome-recycling factor (184 aa).

Belongs to the RRF family.

The protein resides in the cytoplasm. Functionally, responsible for the release of ribosomes from messenger RNA at the termination of protein biosynthesis. May increase the efficiency of translation by recycling ribosomes from one round of translation to another. The polypeptide is Ribosome-recycling factor (Bifidobacterium animalis subsp. lactis (strain AD011)).